We begin with the raw amino-acid sequence, 367 residues long: UDP-N-acetylglucosamine--N-acetylmuramyl-(pentapeptide) pyrophosphoryl-undecaprenol N-acetylglucosamine transferase (367 aa).

UDP-N-acetyl-alpha-D-glucosamine-binding positions include 15 to 17 (TGG), N127, R163, S191, I249, and Q294.

Belongs to the glycosyltransferase 28 family. MurG subfamily.

The protein resides in the cell inner membrane. It carries out the reaction di-trans,octa-cis-undecaprenyl diphospho-N-acetyl-alpha-D-muramoyl-L-alanyl-D-glutamyl-meso-2,6-diaminopimeloyl-D-alanyl-D-alanine + UDP-N-acetyl-alpha-D-glucosamine = di-trans,octa-cis-undecaprenyl diphospho-[N-acetyl-alpha-D-glucosaminyl-(1-&gt;4)]-N-acetyl-alpha-D-muramoyl-L-alanyl-D-glutamyl-meso-2,6-diaminopimeloyl-D-alanyl-D-alanine + UDP + H(+). It functions in the pathway cell wall biogenesis; peptidoglycan biosynthesis. Functionally, cell wall formation. Catalyzes the transfer of a GlcNAc subunit on undecaprenyl-pyrophosphoryl-MurNAc-pentapeptide (lipid intermediate I) to form undecaprenyl-pyrophosphoryl-MurNAc-(pentapeptide)GlcNAc (lipid intermediate II). This chain is UDP-N-acetylglucosamine--N-acetylmuramyl-(pentapeptide) pyrophosphoryl-undecaprenol N-acetylglucosamine transferase, found in Burkholderia thailandensis (strain ATCC 700388 / DSM 13276 / CCUG 48851 / CIP 106301 / E264).